Reading from the N-terminus, the 535-residue chain is Putative cysteine ligase BshC (535 aa).

Residues 420 to 477 adopt a coiled-coil conformation; that stretch reads DTFKALKESINSAYKNLQEKLAPLGADFQKLTGENLGRVMAQVKYLEERAQKYHREKN.

The protein belongs to the BshC family.

Functionally, involved in bacillithiol (BSH) biosynthesis. May catalyze the last step of the pathway, the addition of cysteine to glucosamine malate (GlcN-Mal) to generate BSH. This is Putative cysteine ligase BshC from Carboxydothermus hydrogenoformans (strain ATCC BAA-161 / DSM 6008 / Z-2901).